The following is a 500-amino-acid chain: MSYFPWLTIIVVFPISAGLSIFFLPHRGNKVVRWYTICICLLELLLMTYVFCYHFQLNDPLIQLDEDYEWINIFDFHWRPGIDGLSIGPILLTGFITTLATLAAWPVTRDSRLFHFLMLAMYSGQIGLFSSRDLLLFFLMWELELIPVYLLLSMWGGKKRLYSATKFILYTAGGSVFLLMGVLGMGLYGSNEPTLNFETSANQSYPVSLEILFYFGFLIAYAVKLPIIPLHTWLPDTHGEAHYSTCMLLAGILLKMGAYGLVRINMELLPHAHSIFSPWLVLAGTLQIIYAASTSLGQVNLKKRIAYSSVSHMGFTIIGIGSITDTGLNGAILQLLSHGFLGAALFFLAGTSCDRIRLIYLDEMGGISIPMPKIFTMFSSFSMASLALPGMSGFVAEAVVFFGIITSQKFLFLPKILITFVMAIGMILTPIYLLSMLRQIFYGYKLFNMTNSYFMDSGPRELFVSICIFLPVIGIGIYPDFVLSLSVDKVEAILSNYFYR.

The next 14 helical transmembrane spans lie at 4-24 (FPWLTIIVVFPISAGLSIFFL), 37-57 (ICICLLELLLMTYVFCYHFQL), 87-107 (IGPILLTGFITTLATLAAWPV), 113-130 (LFHFLMLAMYSGQIGLFS), 134-154 (LLLFFLMWELELIPVYLLLSM), 167-187 (FILYTAGGSVFLLMGVLGMGL), 211-231 (ILFYFGFLIAYAVKLPIIPLH), 242-262 (HYSTCMLLAGILLKMGAYGLV), 272-292 (AHSIFSPWLVLAGTLQIIYAA), 305-325 (IAYSSVSHMGFTIIGIGSITD), 330-350 (GAILQLLSHGFLGAALFFLAG), 386-406 (LALPGMSGFVAEAVVFFGIIT), 416-436 (ILITFVMAIGMILTPIYLLSM), and 462-482 (LFVSICIFLPVIGIGIYPDFV).

It belongs to the complex I subunit 4 family.

The protein localises to the plastid. It is found in the chloroplast thylakoid membrane. It carries out the reaction a plastoquinone + NADH + (n+1) H(+)(in) = a plastoquinol + NAD(+) + n H(+)(out). It catalyses the reaction a plastoquinone + NADPH + (n+1) H(+)(in) = a plastoquinol + NADP(+) + n H(+)(out). This chain is NAD(P)H-quinone oxidoreductase chain 4, chloroplastic, found in Acorus calamus var. americanus (American sweet flag).